The chain runs to 905 residues: V-type proton ATPase 116 kDa subunit a 1 (905 aa).

At 1–424 (MGDYVTPGEE…DAYGIATYRE (424 aa)) the chain is on the cytoplasmic side. The chain crosses the membrane as a helical span at residues 425-443 (INPAPYTMISFPFLFAVMF). Residues 444-445 (GD) are Lumenal-facing. A helical membrane pass occupies residues 446–462 (MGHGAIMLLAALFFILK). The Cytoplasmic portion of the chain corresponds to 463–477 (EKQLEAARIKDEIFQ). A helical transmembrane segment spans residues 478 to 507 (TFFGGRYVIFLMGAFSIYTGFMYNDVFSKS). At 508-572 (INTFGSSWQN…EGNKLSFLNS (65 aa)) the chain is on the lumenal side. A helical membrane pass occupies residues 573–592 (MKMKMSVLFGIAQMTFGVLL). Residues 593-610 (SYQNFIYFKSDLDIKYMF) are Cytoplasmic-facing. Residues 611–631 (IPQMIFLSSIFIYLCIQILSK) traverse the membrane as a helical segment. Over 632–699 (WLFFGAVGGT…YPGQATIEII (68 aa)) the chain is Lumenal. Residues 700 to 719 (LVVLALVQVPIMLFAKPYFL) traverse the membrane as a helical segment. Residues 720–788 (YRRDKQQSRY…DVMVYQAIHT (69 aa)) lie on the Cytoplasmic side of the membrane. Residues 789–813 (IEFVLGCVSHTASYLRLWALSLAHA) traverse the membrane as a helical segment. The Lumenal segment spans residues 814–834 (QLSDVLWTMVFRNAFVLDGYT). Residues 835–873 (GAIATYILFFIFGSLSVFILVLMEGLSAFLHALRLHWVE) form a helical membrane-spanning segment. The Cytoplasmic segment spans residues 874-905 (FQSKFYGGLGYEFAPFSFEKILAEEREAEENL).

It belongs to the V-ATPase 116 kDa subunit family. As to quaternary structure, V-ATPase is a heteromultimeric enzyme made up of two complexes: the ATP-hydrolytic V1 complex and the proton translocation V0 complex. The V1 complex consists of three catalytic AB heterodimers that form a heterohexamer, three peripheral stalks each consisting of EG heterodimers, one central rotor including subunits D and F, and the regulatory subunits C and H. The proton translocation complex V0 consists of the proton transport subunit a, a ring of proteolipid subunits c9c'', rotary subunit d, subunits e and f, and the accessory subunits vah-19/Ac45 and vah-20/PRR. Interacts with V-type proton ATPase subunit C vha-11. Ubiquitous expression in embryos. Expressed in gonads, intestine, neurons in the head and motoneurons in the ventral cord of larvae and adults. Expressed in the vulvae and spermathecal uterine valves. Weakly expressed in the pharynx. As to expression, specifically expressed in the nervous system.

The protein resides in the membrane. In terms of biological role, subunit of the V0 complex of vacuolar(H+)-ATPase (V-ATPase), a multisubunit enzyme composed of a peripheral complex (V1) that hydrolyzes ATP and a membrane integral complex (V0) that translocates protons. V-ATPase is responsible for acidifying and maintaining the pH of intracellular compartments and in some cell types, is targeted to the plasma membrane, where it is responsible for acidifying the extracellular environment. Required for assembly and activity of the vacuolar ATPase. Regulates the size of gut granules during embryonic development. In neurons, required for necrotic cell death by promoting intracellular acidification. Required for cell death induced by hypoxia. Required for acidification of synaptic vesicles and the release of neurotransmitters from adult neurons. The polypeptide is V-type proton ATPase 116 kDa subunit a 1 (Caenorhabditis elegans).